Reading from the N-terminus, the 185-residue chain is Celestoxin (185 aa).

A signal peptide spans 1 to 20 (MKFIAAVLLVALLCPKDSTS). The propeptide occupies 21–148 (LASRLSGLLG…GLPVALPVSV (128 aa)).

Expressed by the mandibular venom gland.

It is found in the secreted. Functionally, has a hypotensive activity. This chain is Celestoxin, found in Caribicus warreni (Haitian giant galliwasp).